Here is a 421-residue protein sequence, read N- to C-terminus: MGKLVVQGGAVLEGEVEISGSKNAALPIMAAAILCDEEVILKNVPRLQDVFVMIDILRSIGFRVEFEENELKIKRENDISQEVPYELVRKMRASFNVLGPIAVRTGRAKVALPGGCSIGVRPVDFHLEGLKKMGFSIKVEHGFVEACFERRIDYVTITLPFPSVGATEHLMTTAALLKGARVVIENAAMEPEIVDLQNFINRMGGHIEGAGTSRIVIEGVEKMQGVEYSIIPDRIEAGTYLVAIAASRGKGLVKNVNPDHLTNFFEKLEETGAKLKVLGNEVEIEMRERPKAVDVTTNPYPGFPTDLQPQMMAYLSTASGVSVITENVFKTRFLHVDELKRMGADIEVSGNVAIVKGVEKLSGAPVEGTDLRATAALLIAGIIADGVTEISNVEHIFRGYEDVIDKFSELGAKIEYVEKEN.

22-23 (KN) is a binding site for phosphoenolpyruvate. Residue Arg92 participates in UDP-N-acetyl-alpha-D-glucosamine binding. Catalysis depends on Cys116, which acts as the Proton donor. The residue at position 116 (Cys116) is a 2-(S-cysteinyl)pyruvic acid O-phosphothioketal. Residues Asp306 and Val328 each contribute to the UDP-N-acetyl-alpha-D-glucosamine site.

The protein belongs to the EPSP synthase family. MurA subfamily.

The protein resides in the cytoplasm. The catalysed reaction is phosphoenolpyruvate + UDP-N-acetyl-alpha-D-glucosamine = UDP-N-acetyl-3-O-(1-carboxyvinyl)-alpha-D-glucosamine + phosphate. Its pathway is cell wall biogenesis; peptidoglycan biosynthesis. Cell wall formation. Adds enolpyruvyl to UDP-N-acetylglucosamine. The polypeptide is UDP-N-acetylglucosamine 1-carboxyvinyltransferase (Thermotoga maritima (strain ATCC 43589 / DSM 3109 / JCM 10099 / NBRC 100826 / MSB8)).